Here is a 306-residue protein sequence, read N- to C-terminus: MELKDYYAIMGVKPTDDLKTIKTAYRRLARKYHPDVSKEPDAEARFKEVAEAWEVLSDEQRRAEYDQMWQHRNDPQFSRQFQHGDGQSFNAEDFDDIFSSIFGQHARQSRQRPATRGHDIEIEVAVFLEETLTEHKRTISYNLPVYNAFGMIEQEIPKTLNVKIPAGVGNGQRIRLKGQGTPGENGGPNGDLWLVIHIAPHPLFDIVGQDLEIVVPVSPWEAALGAKVTVPTLKESILLTIPPGSQAGQRLRVKGKGLVSKKQTGDLYAVLKIVMPPKPDENTAALWQQLADAQSSFEPRKDWGKA.

The region spanning 5–69 (DYYAIMGVKP…QRRAEYDQMW (65 aa)) is the J domain.

The protein resides in the cytoplasm. The protein localises to the nucleoid. DNA-binding protein that preferentially recognizes a curved DNA sequence. It is probably a functional analog of DnaJ; displays overlapping activities with DnaJ, but functions under different conditions, probably acting as a molecular chaperone in an adaptive response to environmental stresses other than heat shock. Lacks autonomous chaperone activity; binds native substrates and targets them for recognition by DnaK. Its activity is inhibited by the binding of CbpM. In Escherichia coli O7:K1 (strain IAI39 / ExPEC), this protein is Curved DNA-binding protein.